The following is a 132-amino-acid chain: Small ribosomal subunit protein uS8 (132 aa).

Belongs to the universal ribosomal protein uS8 family. In terms of assembly, part of the 30S ribosomal subunit. Contacts proteins S5 and S12.

One of the primary rRNA binding proteins, it binds directly to 16S rRNA central domain where it helps coordinate assembly of the platform of the 30S subunit. This chain is Small ribosomal subunit protein uS8, found in Xylella fastidiosa (strain M12).